We begin with the raw amino-acid sequence, 255 residues long: Thiazole synthase (255 aa).

The active-site Schiff-base intermediate with DXP is Lys-96. 1-deoxy-D-xylulose 5-phosphate is bound by residues Gly-157, 183 to 184, and 205 to 206; these read AG and NT.

This sequence belongs to the ThiG family. In terms of assembly, homotetramer. Forms heterodimers with either ThiH or ThiS.

The protein localises to the cytoplasm. The catalysed reaction is [ThiS sulfur-carrier protein]-C-terminal-Gly-aminoethanethioate + 2-iminoacetate + 1-deoxy-D-xylulose 5-phosphate = [ThiS sulfur-carrier protein]-C-terminal Gly-Gly + 2-[(2R,5Z)-2-carboxy-4-methylthiazol-5(2H)-ylidene]ethyl phosphate + 2 H2O + H(+). It functions in the pathway cofactor biosynthesis; thiamine diphosphate biosynthesis. In terms of biological role, catalyzes the rearrangement of 1-deoxy-D-xylulose 5-phosphate (DXP) to produce the thiazole phosphate moiety of thiamine. Sulfur is provided by the thiocarboxylate moiety of the carrier protein ThiS. In vitro, sulfur can be provided by H(2)S. The sequence is that of Thiazole synthase from Heliobacterium modesticaldum (strain ATCC 51547 / Ice1).